The chain runs to 226 residues: Chalcone--flavanone isomerase (226 aa).

Residues Thr-47, Asn-112, and Ser-189 each contribute to the substrate site.

The protein belongs to the chalcone isomerase family.

It carries out the reaction a chalcone = a flavanone.. Its pathway is secondary metabolite biosynthesis; flavonoid biosynthesis. Functionally, catalyzes the intramolecular cyclization of bicyclic chalcones into tricyclic (S)-flavanones. Responsible for the isomerization of 4,2',4',6'-tetrahydroxychalcone (also termed chalcone) into naringenin. The protein is Chalcone--flavanone isomerase (CHI) of Allium cepa (Onion).